A 294-amino-acid chain; its full sequence is 4-hydroxy-tetrahydrodipicolinate synthase (294 aa).

Position 45 (T45) interacts with pyruvate. Y133 functions as the Proton donor/acceptor in the catalytic mechanism. The Schiff-base intermediate with substrate role is filled by K161. I203 provides a ligand contact to pyruvate.

It belongs to the DapA family. In terms of assembly, homotetramer; dimer of dimers.

The protein resides in the cytoplasm. The enzyme catalyses L-aspartate 4-semialdehyde + pyruvate = (2S,4S)-4-hydroxy-2,3,4,5-tetrahydrodipicolinate + H2O + H(+). It functions in the pathway amino-acid biosynthesis; L-lysine biosynthesis via DAP pathway; (S)-tetrahydrodipicolinate from L-aspartate: step 3/4. Functionally, catalyzes the condensation of (S)-aspartate-beta-semialdehyde [(S)-ASA] and pyruvate to 4-hydroxy-tetrahydrodipicolinate (HTPA). In Shewanella sp. (strain MR-7), this protein is 4-hydroxy-tetrahydrodipicolinate synthase.